We begin with the raw amino-acid sequence, 359 residues long: 3-dehydroquinate synthase (359 aa).

NAD(+)-binding positions include 71 to 76 (DGEAYK), 105 to 109 (GVIGD), 129 to 130 (TT), lysine 142, and lysine 151. Glutamate 184, histidine 247, and histidine 264 together coordinate Zn(2+).

It belongs to the sugar phosphate cyclases superfamily. Dehydroquinate synthase family. Requires Co(2+) as cofactor. Zn(2+) serves as cofactor. It depends on NAD(+) as a cofactor.

Its subcellular location is the cytoplasm. The catalysed reaction is 7-phospho-2-dehydro-3-deoxy-D-arabino-heptonate = 3-dehydroquinate + phosphate. It participates in metabolic intermediate biosynthesis; chorismate biosynthesis; chorismate from D-erythrose 4-phosphate and phosphoenolpyruvate: step 2/7. Its function is as follows. Catalyzes the conversion of 3-deoxy-D-arabino-heptulosonate 7-phosphate (DAHP) to dehydroquinate (DHQ). In Burkholderia mallei (strain NCTC 10247), this protein is 3-dehydroquinate synthase.